Here is a 342-residue protein sequence, read N- to C-terminus: Arrestin domain-containing protein 5 (342 aa).

The protein belongs to the arrestin family. Testis-enriched.

It localises to the membrane. Functionally, plays an essential role in spermatogenesis. May be involved in the anchoring of the sperm head to the tail during spermatogenesis by affecting SEC22A-mediated SUN5 and NDC1 transport and localization. This is Arrestin domain-containing protein 5 (ARRDC5) from Homo sapiens (Human).